A 207-amino-acid polypeptide reads, in one-letter code: Large ribosomal subunit protein uL4 (207 aa).

The segment at 49–78 (HAVKNRSAVSGGGRKPWRQKGTGRARQGSI) is disordered.

This sequence belongs to the universal ribosomal protein uL4 family. Part of the 50S ribosomal subunit.

One of the primary rRNA binding proteins, this protein initially binds near the 5'-end of the 23S rRNA. It is important during the early stages of 50S assembly. It makes multiple contacts with different domains of the 23S rRNA in the assembled 50S subunit and ribosome. Functionally, forms part of the polypeptide exit tunnel. The chain is Large ribosomal subunit protein uL4 from Streptococcus gordonii (strain Challis / ATCC 35105 / BCRC 15272 / CH1 / DL1 / V288).